Reading from the N-terminus, the 258-residue chain is Hydroxyacylglutathione hydrolase (258 aa).

Positions 52, 54, 56, 57, 109, 126, and 164 each coordinate Zn(2+).

It belongs to the metallo-beta-lactamase superfamily. Glyoxalase II family. In terms of assembly, monomer. Zn(2+) serves as cofactor.

The catalysed reaction is an S-(2-hydroxyacyl)glutathione + H2O = a 2-hydroxy carboxylate + glutathione + H(+). Its pathway is secondary metabolite metabolism; methylglyoxal degradation; (R)-lactate from methylglyoxal: step 2/2. Its function is as follows. Thiolesterase that catalyzes the hydrolysis of S-D-lactoyl-glutathione to form glutathione and D-lactic acid. The sequence is that of Hydroxyacylglutathione hydrolase from Xylella fastidiosa (strain 9a5c).